Reading from the N-terminus, the 628-residue chain is E3 SUMO-protein ligase PIAS3 (628 aa).

The interaction with CCAR2 stretch occupies residues 1 to 200 (MAELGELKHM…QLRFCLCETS (200 aa)). Positions 11–45 (VMSFRVSELQVLLGFAGRNKSGRKHELLAKALHLL) constitute an SAP domain. The LXXLL motif signature appears at 19–23 (LQVLL). Glycyl lysine isopeptide (Lys-Gly) (interchain with G-Cter in SUMO2) cross-links involve residues K46 and K56. The tract at residues 72–95 (PSDLSLLSLPPGTSPVGSPSPLAS) is disordered. The 166-residue stretch at 115–280 (MHPPLPQPVH…SLSVYLVRQL (166 aa)) folds into the PINIT domain. Glycyl lysine isopeptide (Lys-Gly) (interchain with G-Cter in SUMO2) cross-links involve residues K230 and K307. The segment at 312–393 (PDSEVATTSL…FMEILNSCSD (82 aa)) adopts an SP-RING-type zinc-finger fold. Zn(2+) contacts are provided by C343, H345, C366, and C369. Residues 450-460 (LTIESSSDEED) are SUMO1-binding. Residues K466 and K482 each participate in a glycyl lysine isopeptide (Lys-Gly) (interchain with G-Cter in SUMO2) cross-link. Residues 573–618 (LAPTLGSSHRSATPAPAPGRVSSIVAPGSSLREGHGGPLPSGPSLT) are disordered.

The protein belongs to the PIAS family. Binds SUMO1 and UBE2I. Interacts with AR, BCL11A, GFI1, HMGA2, IRF1, MITF, NCOA2, as well as with STAT3, after treatment with IL6, CNTF or OSM and with STAT5, after PRL stimulation. Interacts with PLAG1. Interacts with ZFHX3. Interacts with MTA1. Interacts with CCAR2 (via N-terminus). Interacts with TRIM8. Interacts with PRDM1. Sumoylated. As to expression, widely expressed, with highest levels in lung, kidney and spleen.

Its subcellular location is the cytoplasm. It is found in the nucleus. It localises to the nucleus speckle. It participates in protein modification; protein sumoylation. Functions as an E3-type small ubiquitin-like modifier (SUMO) ligase, stabilizing the interaction between UBE2I and the substrate, and as a SUMO-tethering factor. Plays a crucial role as a transcriptional coregulation in various cellular pathways, including the STAT pathway and the steroid hormone signaling pathway. The effects of this transcriptional coregulation, transactivation or silencing, may vary depending upon the biological context. Enhances the sumoylation of MTA1 and may participate in its paralog-selective sumoylation. Sumoylates CCAR2 which promotes its interaction with SIRT1. Diminishes the sumoylation of ZFHX3 by preventing the colocalization of ZFHX3 with SUMO1 in the nucleus. The chain is E3 SUMO-protein ligase PIAS3 (Pias3) from Rattus norvegicus (Rat).